Reading from the N-terminus, the 84-residue chain is Small ribosomal subunit protein bS18 (84 aa).

It belongs to the bacterial ribosomal protein bS18 family. Part of the 30S ribosomal subunit. Forms a tight heterodimer with protein bS6.

Functionally, binds as a heterodimer with protein bS6 to the central domain of the 16S rRNA, where it helps stabilize the platform of the 30S subunit. The chain is Small ribosomal subunit protein bS18 from Mycobacterium sp. (strain JLS).